The primary structure comprises 336 residues: Probable G-protein coupled receptor 160 (336 aa).

At Met-1–Gln-20 the chain is on the extracellular side. Asn-8 carries an N-linked (GlcNAc...) asparagine glycan. A helical transmembrane segment spans residues Leu-21 to Leu-41. Residues Leu-42–Glu-56 lie on the Cytoplasmic side of the membrane. Residues Tyr-57–Thr-77 form a helical membrane-spanning segment. The Extracellular portion of the chain corresponds to Tyr-78–Cys-95. The helical transmembrane segment at Leu-96–Ala-116 threads the bilayer. The Cytoplasmic portion of the chain corresponds to Cys-117 to Lys-136. The chain crosses the membrane as a helical span at residues Leu-137–Asp-157. The Extracellular portion of the chain corresponds to Pro-158 to Ser-186. The helical transmembrane segment at Leu-187–Leu-207 threads the bilayer. At Leu-208–Arg-243 the chain is on the cytoplasmic side. The helical transmembrane segment at Leu-244–Ser-264 threads the bilayer. The Extracellular segment spans residues Leu-265–Tyr-272. A helical transmembrane segment spans residues Ile-273–Trp-293. At Phe-294–Cys-336 the chain is on the cytoplasmic side.

The protein belongs to the G-protein coupled receptor 1 family.

It localises to the cell membrane. Functionally, orphan receptor. This is Probable G-protein coupled receptor 160 (Gpr160) from Mus musculus (Mouse).